Consider the following 154-residue polypeptide: UPF0225 protein YPTB2098 (154 aa).

The protein belongs to the UPF0225 family.

This Yersinia pseudotuberculosis serotype I (strain IP32953) protein is UPF0225 protein YPTB2098.